Reading from the N-terminus, the 100-residue chain is ESAT-6-like protein EsxB (100 aa).

This sequence belongs to the WXG100 family. CFP-10 subfamily. Forms a tight 1:1 complex with EsxA.

Its subcellular location is the secreted. Its function is as follows. A secreted protein that might play a role in virulence. Might serve as a chaperone to prevent uncontrolled membrane lysis by its partner EsxA. This is ESAT-6-like protein EsxB (esxB) from Mycobacterium leprae (strain TN).